Reading from the N-terminus, the 157-residue chain is Protein FAM162B (157 aa).

Residues 104 to 123 (ACYIMIGLTIVACFAVIVSA) traverse the membrane as a helical segment.

It belongs to the UPF0389 family.

The protein resides in the membrane. This Mus musculus (Mouse) protein is Protein FAM162B (Fam162b).